The sequence spans 167 residues: MRRAHRAGERVMMKRFGIALLAVAIAAGASSLTAQTVTSGLHGPAPLNDEGPAPPMLPNRNTSEREVRNYPEQPPVIPHTIDGYQVDLNGNKCLSCHARARTAESQAPMVSITHFMDRDGQFWPSISPRRFFCTECHVPQNTATPPVSNDFTDIDTLLSRASPGGRR.

The first 34 residues, 1–34 (MRRAHRAGERVMMKRFGIALLAVAIAAGASSLTA), serve as a signal peptide directing secretion. The interval 40–65 (GLHGPAPLNDEGPAPPMLPNRNTSER) is disordered. Positions 79, 93, 96, 97, 114, 133, 136, and 137 each coordinate heme c.

The protein belongs to the NapB family. In terms of assembly, component of the periplasmic nitrate reductase NapAB complex composed of NapA and NapB. Post-translationally, binds 2 heme C groups per subunit.

The protein resides in the periplasm. Functionally, electron transfer subunit of the periplasmic nitrate reductase complex NapAB. Receives electrons from the membrane-anchored tetraheme c-type NapC protein and transfers these to NapA subunit, thus allowing electron flow between membrane and periplasm. Essential for periplasmic nitrate reduction with nitrate as the terminal electron acceptor. This Bradyrhizobium japonicum protein is Periplasmic nitrate reductase, electron transfer subunit.